The primary structure comprises 404 residues: S-adenosylmethionine synthase (404 aa).

Positions 1–13 (MSHSRYFFTSESV) are enriched in polar residues. The disordered stretch occupies residues 1–20 (MSHSRYFFTSESVSEGHPDK). Residue H17 participates in ATP binding. D19 is a binding site for Mg(2+). E45 is a binding site for K(+). Residues E58 and Q101 each contribute to the L-methionine site. The segment at 101-111 (QSPDINRGVDR) is flexible loop. Residues 172–174 (DSK), 246–247 (RF), D255, 261–262 (RK), A278, and K282 each bind ATP. An L-methionine-binding site is contributed by D255. K286 is a binding site for L-methionine.

Belongs to the AdoMet synthase family. Homotetramer; dimer of dimers. Mg(2+) serves as cofactor. It depends on K(+) as a cofactor.

Its subcellular location is the cytoplasm. It carries out the reaction L-methionine + ATP + H2O = S-adenosyl-L-methionine + phosphate + diphosphate. The protein operates within amino-acid biosynthesis; S-adenosyl-L-methionine biosynthesis; S-adenosyl-L-methionine from L-methionine: step 1/1. In terms of biological role, catalyzes the formation of S-adenosylmethionine (AdoMet) from methionine and ATP. The overall synthetic reaction is composed of two sequential steps, AdoMet formation and the subsequent tripolyphosphate hydrolysis which occurs prior to release of AdoMet from the enzyme. In Chlorobaculum parvum (strain DSM 263 / NCIMB 8327) (Chlorobium vibrioforme subsp. thiosulfatophilum), this protein is S-adenosylmethionine synthase.